Consider the following 276-residue polypeptide: Type 2 phosphatidylinositol 4,5-bisphosphate 4-phosphatase (276 aa).

Basic and acidic residues predominate over residues 1 to 10 (MAADGIDERS). Residues 1–27 (MAADGIDERSPLISPSSGNVTPTAPPY) form a disordered region. Over residues 13 to 27 (ISPSSGNVTPTAPPY) the composition is skewed to polar residues. Residue Cys-106 is part of the active site. Positions 106-112 (CKDISRR) match the CX5R motif motif. A run of 2 helical transmembrane segments spans residues 211-231 (CCTY…LTVG) and 246-266 (WAVA…WGAI).

It localises to the late endosome membrane. The protein localises to the lysosome membrane. The catalysed reaction is a 1,2-diacyl-sn-glycero-3-phospho-(1D-myo-inositol-4,5-bisphosphate) + H2O = a 1,2-diacyl-sn-glycero-3-phospho-(1D-myo-inositol-5-phosphate) + phosphate. In terms of biological role, catalyzes the hydrolysis of phosphatidylinositol-4,5-bisphosphate (PtdIns-4,5-P2) to phosphatidylinositol-4-phosphate (PtdIns-4-P). The chain is Type 2 phosphatidylinositol 4,5-bisphosphate 4-phosphatase (pip4p2) from Xenopus tropicalis (Western clawed frog).